The sequence spans 168 residues: MPRSQINGNFIDKTFSIVANILLRIIPTTSGEKEAFTYYRDGMSAQSEGNYAEALQNYYEAMRLEIDPYDRSYILYNIGLIHTSNGEHTKALEYYFRALERNPFLPQAFNNMAVICHYRGEQAIRQGDSEIAEAWFDQAAEYWKQAIALTPGNYIEAQNWLKITRRFE.

TPR repeat units lie at residues 35-68 (AFTY…EIDP), 72-105 (SYIL…NPFL), and 120-153 (GEQA…TPGN).

Belongs to the Ycf3 family.

The protein localises to the plastid. It localises to the chloroplast thylakoid membrane. Essential for the assembly of the photosystem I (PSI) complex. May act as a chaperone-like factor to guide the assembly of the PSI subunits. This Gossypium barbadense (Sea Island cotton) protein is Photosystem I assembly protein Ycf3.